The following is a 288-amino-acid chain: Polyamine aminopropyltransferase (288 aa).

The 230-residue stretch at 9-238 (ETLHDQFGQY…GIMTFAWATD (230 aa)) folds into the PABS domain. Glutamine 33 lines the S-methyl-5'-thioadenosine pocket. Spermidine is bound by residues histidine 64 and aspartate 88. S-methyl-5'-thioadenosine is bound by residues glutamate 108 and 140–141 (DG). Aspartate 158 (proton acceptor) is an active-site residue. 158-161 (DCTD) contributes to the spermidine binding site. Proline 165 serves as a coordination point for S-methyl-5'-thioadenosine.

The protein belongs to the spermidine/spermine synthase family. Homodimer or homotetramer.

The protein localises to the cytoplasm. The catalysed reaction is S-adenosyl 3-(methylsulfanyl)propylamine + putrescine = S-methyl-5'-thioadenosine + spermidine + H(+). The protein operates within amine and polyamine biosynthesis; spermidine biosynthesis; spermidine from putrescine: step 1/1. In terms of biological role, catalyzes the irreversible transfer of a propylamine group from the amino donor S-adenosylmethioninamine (decarboxy-AdoMet) to putrescine (1,4-diaminobutane) to yield spermidine. In Shigella boydii serotype 18 (strain CDC 3083-94 / BS512), this protein is Polyamine aminopropyltransferase.